Consider the following 35-residue polypeptide: Antimicrobial peptide 3 (35 aa).

The region spanning 4–35 (GGECGGRFGGCAGGQCCSRFGFCGSGPKYCAH) is the Chitin-binding type-1 domain. 3 cysteine pairs are disulfide-bonded: cysteine 7–cysteine 20, cysteine 14–cysteine 26, and cysteine 19–cysteine 33.

In terms of processing, contains 3 disulfide bonds. In terms of tissue distribution, expressed in leaf, flower, stem and seed with highest expression in leaf (at protein level).

Its function is as follows. Has antifungal activity against A.niger (IC(50)=5.4 uM), B.sorokiniana (IC(50)=2.0 uM), B.cinerea (IC(50)=1.6 uM), F.solani (IC(50)=3.7 uM) and A.alternata (IC(50)=5.0 uM). Binds chitin in vitro. Has no antibacterial activity at concentrations up to 10 uM. In Stellaria media (Common chickweed), this protein is Antimicrobial peptide 3.